Reading from the N-terminus, the 1206-residue chain is DNA-directed RNA polymerase subunit beta' (1206 aa).

Residues C60, C62, C75, and C78 each coordinate Zn(2+). D449, D451, and D453 together coordinate Mg(2+). 4 residues coordinate Zn(2+): C818, C892, C899, and C902.

This sequence belongs to the RNA polymerase beta' chain family. In terms of assembly, the RNAP catalytic core consists of 2 alpha, 1 beta, 1 beta' and 1 omega subunit. When a sigma factor is associated with the core the holoenzyme is formed, which can initiate transcription. Requires Mg(2+) as cofactor. Zn(2+) serves as cofactor.

The enzyme catalyses RNA(n) + a ribonucleoside 5'-triphosphate = RNA(n+1) + diphosphate. Functionally, DNA-dependent RNA polymerase catalyzes the transcription of DNA into RNA using the four ribonucleoside triphosphates as substrates. The protein is DNA-directed RNA polymerase subunit beta' of Shouchella clausii (strain KSM-K16) (Alkalihalobacillus clausii).